The primary structure comprises 416 residues: UDP-N-acetylmuramoylalanine--D-glutamate ligase (416 aa).

Residue 108–114 participates in ATP binding; that stretch reads GTVGKTT.

This sequence belongs to the MurCDEF family.

The protein localises to the cytoplasm. The catalysed reaction is UDP-N-acetyl-alpha-D-muramoyl-L-alanine + D-glutamate + ATP = UDP-N-acetyl-alpha-D-muramoyl-L-alanyl-D-glutamate + ADP + phosphate + H(+). The protein operates within cell wall biogenesis; peptidoglycan biosynthesis. Functionally, cell wall formation. Catalyzes the addition of glutamate to the nucleotide precursor UDP-N-acetylmuramoyl-L-alanine (UMA). The polypeptide is UDP-N-acetylmuramoylalanine--D-glutamate ligase (Chlamydia muridarum (strain MoPn / Nigg)).